The chain runs to 741 residues: Cellulose 1,4-beta-cellobiosidase (reducing end) CelS (741 aa).

Residues 1-27 (MVKSRKISILLAVAMLVSIMIPTTAFA) form the signal peptide. Glutamate 76 lines the substrate pocket. Residue glutamate 87 is the Proton donor of the active site. Substrate contacts are provided by residues threonine 140, asparagine 204, aspartate 241, glutamine 247, and 251 to 252 (TN). The active-site Nucleophile is the aspartate 255. Residues 301–302 (KY), 326–327 (WY), tyrosine 421, aspartate 520, and 645–646 (WH) contribute to the substrate site. Residues 673–739 (STKLYGDVND…ILKEIDTLPY (67 aa)) form the Dockerin domain. 12 residues coordinate Ca(2+): aspartate 679, asparagine 681, aspartate 683, glycine 684, lysine 685, aspartate 690, aspartate 711, leucine 712, asparagine 713, aspartate 715, arginine 717, and aspartate 722.

It belongs to the glycosyl hydrolase 48 (cellulase L) family.

The protein localises to the secreted. It carries out the reaction Hydrolysis of (1-&gt;4)-beta-D-glucosidic linkages in cellulose and similar substrates, releasing cellobiose from the reducing ends of the chains.. With respect to regulation, inhibited by cellobiose and lactose, but not by glucose. This enzyme catalyzes the exohydrolysis of 1,4-beta-glucosidic linkages in cellulose with a preference for amorphous or crystalline cellulose over carboxymethyl cellulose. This chain is Cellulose 1,4-beta-cellobiosidase (reducing end) CelS (celS), found in Acetivibrio thermocellus (strain ATCC 27405 / DSM 1237 / JCM 9322 / NBRC 103400 / NCIMB 10682 / NRRL B-4536 / VPI 7372) (Clostridium thermocellum).